The primary structure comprises 158 residues: Cyclic pyranopterin monophosphate synthase (158 aa).

Residues 75–77 (LCH) and 113–114 (ME) contribute to the substrate site. Asp-128 is a catalytic residue.

It belongs to the MoaC family. As to quaternary structure, homohexamer; trimer of dimers.

It carries out the reaction (8S)-3',8-cyclo-7,8-dihydroguanosine 5'-triphosphate = cyclic pyranopterin phosphate + diphosphate. It participates in cofactor biosynthesis; molybdopterin biosynthesis. Its function is as follows. Catalyzes the conversion of (8S)-3',8-cyclo-7,8-dihydroguanosine 5'-triphosphate to cyclic pyranopterin monophosphate (cPMP). This Acidiphilium cryptum (strain JF-5) protein is Cyclic pyranopterin monophosphate synthase.